The following is a 1258-amino-acid chain: Non-secreted LysM effector LysM19 (1258 aa).

Residues 148 to 168 (VTQSLPNISSHEKRDDHEGNS) are disordered. Basic and acidic residues predominate over residues 157-168 (SHEKRDDHEGNS). 2 consecutive LysM domains span residues 1028–1073 (IVYT…SICL) and 1179–1227 (RWHV…AYCT).

It belongs to the secreted LysM effector family.

Functionally, non-secreted LysM effector that might be involved in manipulation of host defenses for successful infection. The chain is Non-secreted LysM effector LysM19 from Penicillium expansum (Blue mold rot fungus).